Here is a 666-residue protein sequence, read N- to C-terminus: DNA ligase (666 aa).

NAD(+) contacts are provided by residues 31–35 (DYDFD), 80–81 (SL), and Glu111. The N6-AMP-lysine intermediate role is filled by Lys113. NAD(+) is bound by residues Arg134, Glu170, Lys285, and Lys309. Positions 403, 406, 421, and 427 each coordinate Zn(2+). The 80-residue stretch at 587–666 (VVSNKLLGKI…ESDFSALLTS (80 aa)) folds into the BRCT domain.

It belongs to the NAD-dependent DNA ligase family. LigA subfamily. The cofactor is Mg(2+). Mn(2+) serves as cofactor.

The catalysed reaction is NAD(+) + (deoxyribonucleotide)n-3'-hydroxyl + 5'-phospho-(deoxyribonucleotide)m = (deoxyribonucleotide)n+m + AMP + beta-nicotinamide D-nucleotide.. In terms of biological role, DNA ligase that catalyzes the formation of phosphodiester linkages between 5'-phosphoryl and 3'-hydroxyl groups in double-stranded DNA using NAD as a coenzyme and as the energy source for the reaction. It is essential for DNA replication and repair of damaged DNA. In Flavobacterium psychrophilum (strain ATCC 49511 / DSM 21280 / CIP 103535 / JIP02/86), this protein is DNA ligase.